A 794-amino-acid chain; its full sequence is Zinc finger and BTB domain-containing protein 17 (794 aa).

The BTB domain occupies 1 to 104 (MDFPQHSQRV…VASFLQMQDI (104 aa)). Residues 116 to 285 (EPSSTTGESA…QNLRSGTYGD (170 aa)) are disordered. A compositionally biased stretch (basic and acidic residues) spans 132–142 (GGDKRAKDEKA). Residues 203–216 (SSMAAAEAEALSES) show a composition bias toward low complexity. Basic and acidic residues predominate over residues 243–252 (VKEEGMHLDN). Over residues 254 to 263 (EPPEENEESA) the composition is skewed to acidic residues. The tract at residues 260-299 (EESAGTDSGQELGMEGQNLRSGTYGDRTESKAYGSIIHKC) is interaction with MYC. C2H2-type zinc fingers lie at residues 297–319 (HKCE…IRIH), 325–347 (FSCR…EKTH), 353–375 (YGCE…KKRH), 381–403 (YRCG…QLVH), 409–431 (YQCD…LETH), 437–459 (HKCP…LKIH), 465–487 (LKCR…LRIH), 493–515 (YVCT…VRIH), 519–543 (KPCQ…VRQH), 549–571 (YVCE…IRHH), 577–599 (HKCS…IIIH), 605–628 (YLCD…KTVH), and 708–730 (YACD…VRIH). K388 is covalently cross-linked (Glycyl lysine isopeptide (Lys-Gly) (interchain with G-Cter in ubiquitin)). Residue K472 forms a Glycyl lysine isopeptide (Lys-Gly) (interchain with G-Cter in ubiquitin) linkage. Residues 628 to 709 (HQGKAGIKIL…EDPNTHILYA (82 aa)) form an interaction with MYC region. Positions 628–794 (HQGKAGIKIL…TAPDCLPPAE (167 aa)) are interaction with HCFC1. A disordered region spans residues 769–794 (PRDGTEGQPTLAESPPTAPDCLPPAE). The segment covering 784–794 (PTAPDCLPPAE) has biased composition (pro residues).

Belongs to the krueppel C2H2-type zinc-finger protein family. As to quaternary structure, homooligomerizes (via the BTB/POZ domain), multimerization is required for DNA binding. Binds to the C-terminal helix-loop-helix motif of MYC which inhibits ZBTB17 transactivation and growth arrest activities and renders it insoluble in the nucleus. Also interacts with HCFC1, MAGEA4 and TMPRSS11A. Interacts (via the C-terminal zinc fingers) with GFI1; the interaction results in the recruitment of MYC to the CDKN1A/p21 and CDKN1B promoters and repression of transcription. Interacts with TRAF2, interfering with the binding of UBC13 to TRAF2, and inhibiting TRAF2 E3 ligase activity. Interacts with BCL6; the interaction inhibits ZBTB17 transactivation activity on target genes involved in cell cycle arrest. Interacts with ZBTB49; this interaction blocks ZBTB17-mediated repression of RB1. Undergoes 'Lys-48'-linked polyubiquitination at Lys-388 and Lys-472 and subsequent proteasomal degradation in a TRAF2-dependent manner and upon TNFA stimulation. Found in all the embryonic and adult tissues examined.

It is found in the nucleus. In terms of biological role, transcription factor that can function as an activator or repressor depending on its binding partners, and by targeting negative regulators of cell cycle progression. Has been shown to bind to the promoters of adenovirus major late protein and cyclin D1 and activate transcription. Required for early embryonic development during gastrulation. Plays a critical role in early lymphocyte development, where it is essential to prevent apoptosis in lymphoid precursors, allowing them to survive in response to IL7 and undergo proper lineage commitment. Represses RB1 transcription; this repression can be blocked by interaction with ZBTB49. The polypeptide is Zinc finger and BTB domain-containing protein 17 (Zbtb17) (Mus musculus (Mouse)).